The chain runs to 114 residues: Large ribosomal subunit protein P2v (114 aa).

Positions 74-114 (VASGGGGGAAPAAEPASVESKKKEEEKEESEDDGGMMSLFD) are disordered. The residue at position 103 (S103) is a Phosphoserine.

Belongs to the eukaryotic ribosomal protein P1/P2 family. In terms of assembly, P1 and P2 exist as dimers at the large ribosomal subunit. In terms of processing, phosphorylated.

Functionally, plays an important role in the elongation step of protein synthesis. The chain is Large ribosomal subunit protein P2v (RPP2E) from Arabidopsis thaliana (Mouse-ear cress).